We begin with the raw amino-acid sequence, 412 residues long: Odorant receptor 47b (412 aa).

The Cytoplasmic portion of the chain corresponds to 1–74 (MNDSGYQSNL…NLFIMCNVMT (74 aa)). The helical transmembrane segment at 75–95 (IFWTMFVALPESKNVIEMGDD) threads the bilayer. Residues 96-103 (LVWISGMA) lie on the Extracellular side of the membrane. A helical membrane pass occupies residues 104–124 (LVFTKIFYMHLRCDEIDELIS). Over 125 to 169 (DFEYYNRELRPHNIDEEVLGWQRLCYVIESGLYINCFCLVNFFSA) the chain is Cytoplasmic. Residues 170-190 (AIFLQPLLGEGKLPFHSVYPF) traverse the membrane as a helical segment. Over 191–229 (QWHRLDLHPYTFWFLYIWQSLTSQHNLMSILMVDMVGIS) the chain is Extracellular. A helical membrane pass occupies residues 230–250 (TFLQTALNLKLLCIEIRKLGD). Over 251 to 302 (MEVSDKRFHEEFCRVVRFHQHIIKLVGKANRAFNGAFNAQLMASFSLISIST) the chain is Cytoplasmic. A helical transmembrane segment spans residues 303–323 (FETMAAAAVDPKMAAKFVLLM). Topologically, residues 324-330 (LVAFIQL) are extracellular. Residues 331–351 (SLWCVSGTLVYTQSVEVAQAA) traverse the membrane as a helical segment. Over 352 to 389 (FDINDWHTKSPGIQRDISFVILRAQKPLMYVAEPFLPF) the chain is Cytoplasmic. A helical transmembrane segment spans residues 390 to 410 (TLGTYMLVLKNCYRLLALMQE). Residues 411–412 (SM) lie on the Extracellular side of the membrane.

Belongs to the insect chemoreceptor superfamily. Heteromeric odorant receptor channel (TC 1.A.69) family. Or49a subfamily. As to quaternary structure, interacts with Orco. Complexes exist early in the endomembrane system in olfactory sensory neurons (OSNs), coupling these complexes to the conserved ciliary trafficking pathway. Expressed in olfactory sensory neurons in the antenna.

Its subcellular location is the cell membrane. In terms of biological role, odorant receptor which mediates acceptance or avoidance behavior, depending on its substrates. The odorant receptor repertoire encodes a large collection of odor stimuli that vary widely in identity, intensity, and duration. May form a complex with Orco to form odorant-sensing units, providing sensitive and prolonged odorant signaling and calcium permeability. Plays an important role in sociosexual interactions since its enhances courtship in a pheromone-dependent manner. The chain is Odorant receptor 47b (Or47b) from Drosophila melanogaster (Fruit fly).